Consider the following 541-residue polypeptide: Tyrosine-protein kinase Yes (541 aa).

Positions Met-1–Asn-20 are enriched in basic and acidic residues. The interval Met-1–Pro-43 is disordered. Gly-2 carries the N-myristoyl glycine lipid modification. The S-palmitoyl cysteine; in membrane form moiety is linked to residue Cys-3. The segment covering Ser-26 to Ser-37 has biased composition (low complexity). One can recognise an SH3 domain in the interval Gly-89–Ser-150. In terms of domain architecture, SH2 spans Trp-156 to Cys-253. Positions Leu-275–Phe-528 constitute a Protein kinase domain. ATP contacts are provided by residues Leu-281–Val-289 and Lys-303. Asp-394 acts as the Proton acceptor in catalysis. Tyr-424 bears the Phosphotyrosine; by autocatalysis mark. Tyr-535 carries the phosphotyrosine; by CSK modification.

The protein belongs to the protein kinase superfamily. Tyr protein kinase family. SRC subfamily. Post-translationally, autophosphorylation at Tyr-424 maintains enzyme activity. In terms of processing, palmitoylation at Cys-3 promotes membrane localization.

The protein resides in the cell membrane. Its subcellular location is the cytoplasm. It localises to the cytoskeleton. It is found in the microtubule organizing center. The protein localises to the centrosome. The protein resides in the cytosol. Its subcellular location is the cell junction. The enzyme catalyses L-tyrosyl-[protein] + ATP = O-phospho-L-tyrosyl-[protein] + ADP + H(+). In terms of biological role, non-receptor protein tyrosine kinase that is involved in the regulation of cell growth and survival, apoptosis, cell-cell adhesion, cytoskeleton remodeling, differentiation, G2/M progression and cytokinesis. This Gallus gallus (Chicken) protein is Tyrosine-protein kinase Yes (YES1).